A 409-amino-acid chain; its full sequence is Dual-specificity RNA methyltransferase RlmN (409 aa).

The active-site Proton acceptor is glutamate 117. The 250-residue stretch at 128–377 (LNGRKTLCIS…CTIRQTRGDD (250 aa)) folds into the Radical SAM core domain. An intrachain disulfide couples cysteine 135 to cysteine 382. Residues cysteine 142, cysteine 146, and cysteine 149 each coordinate [4Fe-4S] cluster. S-adenosyl-L-methionine-binding positions include 205–206 (GE), serine 237, 259–261 (SLH), and asparagine 339. Cysteine 382 serves as the catalytic S-methylcysteine intermediate.

Belongs to the radical SAM superfamily. RlmN family. The cofactor is [4Fe-4S] cluster.

It is found in the cytoplasm. It catalyses the reaction adenosine(2503) in 23S rRNA + 2 reduced [2Fe-2S]-[ferredoxin] + 2 S-adenosyl-L-methionine = 2-methyladenosine(2503) in 23S rRNA + 5'-deoxyadenosine + L-methionine + 2 oxidized [2Fe-2S]-[ferredoxin] + S-adenosyl-L-homocysteine. The enzyme catalyses adenosine(37) in tRNA + 2 reduced [2Fe-2S]-[ferredoxin] + 2 S-adenosyl-L-methionine = 2-methyladenosine(37) in tRNA + 5'-deoxyadenosine + L-methionine + 2 oxidized [2Fe-2S]-[ferredoxin] + S-adenosyl-L-homocysteine. Functionally, specifically methylates position 2 of adenine 2503 in 23S rRNA and position 2 of adenine 37 in tRNAs. m2A2503 modification seems to play a crucial role in the proofreading step occurring at the peptidyl transferase center and thus would serve to optimize ribosomal fidelity. In Psychrobacter arcticus (strain DSM 17307 / VKM B-2377 / 273-4), this protein is Dual-specificity RNA methyltransferase RlmN.